The sequence spans 309 residues: Wall-associated proteinase (309 aa).

N-linked (GlcNAc...) asparagine glycosylation is found at N190 and N295.

Its subcellular location is the secreted. It localises to the cell wall. It is found in the membrane. Functionally, may participate in wall plasticization and/or intussusception or in cell wall turnover. This is Wall-associated proteinase from Coccidioides posadasii (strain RMSCC 757 / Silveira) (Valley fever fungus).